The chain runs to 398 residues: MSKTIAINAGSSSLKWQLYQMPEEEVLAQGIIERIGLKDSISTVKYDGKKEEQILDIHDHTEAVKILLNDLIHFGIIAAYDEITGVGHRVVAGGELFKESVVVNDKVLEHIEELSVLAPLHNPGAAAGIRAFRDILPDITSVCVFDTSFHTSMAKHTYLYPIPQKYYTDYKVRKYGAHGTSHKYVAQEAAKMLGRPLEELKLITAHIGNGVSITANYHGKSVDTSMGFTPLAGPMMGTRSGDIDPAIIPYLIEQDPELKDAADVVNMLNKKSGLSGVSGISSDMRDIEAGLQEDNPDAVLAYNIFIDRIKKYIGQYFAVLNGADALVFTAGMGENAPLMRQDVIGGLTWFGMDIDPEKNVFGYRGDISTPESKVKVLVISTDEELCIARDVERLKNTK.

Asn-8 is a binding site for Mg(2+). Lys-15 contacts ATP. Arg-89 lines the substrate pocket. Asp-146 (proton donor/acceptor) is an active-site residue. Residues 206–210, 283–285, and 331–335 each bind ATP; these read HIGNG, DMR, and GMGEN. Glu-383 is a binding site for Mg(2+).

Belongs to the acetokinase family. Homodimer. Mg(2+) serves as cofactor. Mn(2+) is required as a cofactor.

Its subcellular location is the cytoplasm. It carries out the reaction acetate + ATP = acetyl phosphate + ADP. The protein operates within metabolic intermediate biosynthesis; acetyl-CoA biosynthesis; acetyl-CoA from acetate: step 1/2. Functionally, catalyzes the formation of acetyl phosphate from acetate and ATP. Can also catalyze the reverse reaction. The sequence is that of Acetate kinase from Streptococcus pyogenes serotype M5 (strain Manfredo).